Consider the following 261-residue polypeptide: THO complex subunit THP2 (261 aa).

As to quaternary structure, component of the THO complex, which is composed of HPR1, MFT1, THO2 and THP2. Together with SUB2, TEX1 and YRA1, THO forms the transcription/export (TREX) complex. THO associates with DNA and RNA in vitro.

The protein localises to the nucleus. Component the THO subcomplex of the TREX complex, which operates in coupling transcription elongation to mRNA export. The THO complex is recruited to transcribed genes and moves along the gene with the elongating polymerase during transcription. THO is important for stabilizing nascent RNA in the RNA polymerase II elongation complex by preventing formation of DNA:RNA hybrids behind the elongating polymerase. It functions in cotranscriptional formation of an export-competent messenger ribonucleoprotein particle (mRNP) by facilitating the loading of ATP-dependent RNA helicase SUB2 and the mRNA export factor YRA1 along the nascent mRNA. The chain is THO complex subunit THP2 (THP2) from Saccharomyces cerevisiae (strain ATCC 204508 / S288c) (Baker's yeast).